We begin with the raw amino-acid sequence, 775 residues long: Protein STRUBBELIG-RECEPTOR FAMILY 1 (775 aa).

Residues 1–31 (MRSMRSGRDNNICFLGFLSFALISLPSLSLA) form the signal peptide. Residues 32-314 (LTNPDDVAAI…GKEDSFTSKR (283 aa)) lie on the Extracellular side of the membrane. 6 LRR repeats span residues 101 to 122 (SLKA…TLPV), 123 to 146 (SLQN…SSLK), 147 to 169 (SLSV…FQDL), 171 to 193 (LMIN…MQNL), 195 to 217 (TLTS…QDLP), and 218 to 238 (LKDL…KLLS). Residue N133 is glycosylated (N-linked (GlcNAc...) asparagine). N-linked (GlcNAc...) asparagine glycans are attached at residues N181 and N192. N250 is a glycosylation site (N-linked (GlcNAc...) asparagine). Residues 254 to 308 (APSPSPETPPSPTSPKRPFFGPPSPNASAGHGQAHVRSPPSDHHPSRPTPQGKED) are disordered. Pro residues predominate over residues 256-278 (SPSPETPPSPTSPKRPFFGPPSP). N-linked (GlcNAc...) asparagine glycosylation occurs at N279. Residues 315–335 (IIWISILGAFSFVVLALVCLL) traverse the membrane as a helical segment. Topologically, residues 336-775 (CGRKCLRKRE…NGDNQYTGRR (440 aa)) are cytoplasmic. The tract at residues 345–414 (EDSEQLSKPH…VGSESKQESH (70 aa)) is disordered. A compositionally biased stretch (polar residues) spans 367–379 (RSNASMLPPSNTF). Residues 380-391 (NKDKEARPKERV) show a composition bias toward basic and acidic residues. A Protein kinase domain is found at 478–756 (FSHENLIGTG…EVVQDLSDMI (279 aa)).

Belongs to the protein kinase superfamily. Ser/Thr protein kinase family. In terms of tissue distribution, expressed in roots, stems, leaves and flowers. Low expression in seedlings and siliques.

The protein resides in the membrane. Functionally, not essential for epidermal patterning and not redundant with STRUBBELIG. The chain is Protein STRUBBELIG-RECEPTOR FAMILY 1 (SRF1) from Arabidopsis thaliana (Mouse-ear cress).